The chain runs to 245 residues: 1-(5-phosphoribosyl)-5-[(5-phosphoribosylamino)methylideneamino] imidazole-4-carboxamide isomerase (245 aa).

The Proton acceptor role is filled by Asp8. The active-site Proton donor is the Asp129.

Belongs to the HisA/HisF family.

It is found in the cytoplasm. The catalysed reaction is 1-(5-phospho-beta-D-ribosyl)-5-[(5-phospho-beta-D-ribosylamino)methylideneamino]imidazole-4-carboxamide = 5-[(5-phospho-1-deoxy-D-ribulos-1-ylimino)methylamino]-1-(5-phospho-beta-D-ribosyl)imidazole-4-carboxamide. It participates in amino-acid biosynthesis; L-histidine biosynthesis; L-histidine from 5-phospho-alpha-D-ribose 1-diphosphate: step 4/9. The polypeptide is 1-(5-phosphoribosyl)-5-[(5-phosphoribosylamino)methylideneamino] imidazole-4-carboxamide isomerase (Rhodopseudomonas palustris (strain BisB5)).